The following is a 473-amino-acid chain: MADGEESISVAWQSVLDKLETDDRITPQLHGFLSLVEPKGIMAGTFYLEVPNEFTRGMIEQRSRVPLLNAIGTLDNTLAVTTFAIVVNPEIQQESLSTVGEPEPTPAPYLDVATFTVAPPAEITAPPRNGDTRLNSKYSFDNFVIGQSNRFAHAAAVAVAEAPAKAYNPLFIYGDSGLGKTHLLHAIGHYAMSLYPGIRVRYVSSEEFTNDFINSIANNRGSSFQARYRNIDILLIDDIQFLQRAVETQEAFFHTFNTLHDHNKQVVITSDLPPKHLTGFEDRMRSRFEWGLITDVQVPDLETRIAILRKKAQSEKIQVPDDILEFMASKISSNIRELEGTLIRVTAFASLNRTPVDMPLVQTVLKDLITLDDDNVIAPTDIITNTAEYFKLTVDDLYGSSRSQAVATARQIAMYLCRELTNLSLPKIGQLFGGRDHTTVMYANKKISELMKERRSIYNQVTELTSRIKQNHR.

Residues 1-87 (MADGEESISV…LAVTTFAIVV (87 aa)) are domain I, interacts with DnaA modulators. Positions 87-132 (VNPEIQQESLSTVGEPEPTPAPYLDVATFTVAPPAEITAPPRNGDT) are domain II. The domain III, AAA+ region stretch occupies residues 133–349 (RLNSKYSFDN…GTLIRVTAFA (217 aa)). The ATP site is built by Gly-177, Gly-179, Lys-180, and Thr-181. The domain IV, binds dsDNA stretch occupies residues 350 to 473 (SLNRTPVDMP…LTSRIKQNHR (124 aa)).

It belongs to the DnaA family. As to quaternary structure, oligomerizes as a right-handed, spiral filament on DNA at oriC.

It localises to the cytoplasm. Functionally, plays an essential role in the initiation and regulation of chromosomal replication. ATP-DnaA binds to the origin of replication (oriC) to initiate formation of the DNA replication initiation complex once per cell cycle. Binds the DnaA box (a 9 base pair repeat at the origin) and separates the double-stranded (ds)DNA. Forms a right-handed helical filament on oriC DNA; dsDNA binds to the exterior of the filament while single-stranded (ss)DNA is stabiized in the filament's interior. The ATP-DnaA-oriC complex binds and stabilizes one strand of the AT-rich DNA unwinding element (DUE), permitting loading of DNA polymerase. After initiation quickly degrades to an ADP-DnaA complex that is not apt for DNA replication. Binds acidic phospholipids. The chain is Chromosomal replication initiator protein DnaA from Leifsonia xyli subsp. xyli (strain CTCB07).